Reading from the N-terminus, the 317-residue chain is Putative HTH-type transcriptional regulatory protein Mboo_0195 (317 aa).

The region spanning 132-185 is the HTH cro/C1-type domain; it reads LRELRERRSMSLGDLGQVLGVSRRTISKYESGMGTTLEVAIRIEEYFNTGVVES. A DNA-binding region (H-T-H motif) is located at residues 143-162; that stretch reads LGDLGQVLGVSRRTISKYES.

The sequence is that of Putative HTH-type transcriptional regulatory protein Mboo_0195 from Methanoregula boonei (strain DSM 21154 / JCM 14090 / 6A8).